Reading from the N-terminus, the 270-residue chain is MAKVPDLFEDLKNCYSENEEYSSAIDHLSLNQKSFYDASYGSLHENCTDKFVSLRTSETSKMSTFTFKESRVVVSATSNKGKILKKRRLSFNQPFTEDDLEAIAHDLEETIQPRSAPHSFQNNLRYKLIRIVKQEFIMNDSLNQNIYVDMDRIHLKAASLNDLQLEVKFDMYAYSSGGDDSKYPVTLKVSNTQLFVSAQGEDKPVLLKEIPETPKLITGSETDLIFFWEKINSKNYFTSAAFPELLIATKEQSQVHLARGLPSMIDFQIS.

Positions 1-114 (MAKVPDLFED…HDLEETIQPR (114 aa)) are excised as a propeptide. An N-linked (GlcNAc...) asparagine glycan is attached at N46. At K85 the chain carries N6-acetyllysine. The interval 85 to 89 (KKRRL) is nuclear localization signal (NLS). Position 90 is a phosphoserine (S90). A glycan (N-linked (GlcNAc...) asparagine) is linked at N139.

It belongs to the IL-1 family. In terms of assembly, monomer. Interacts with TMED10; the interaction mediates the translocation from the cytoplasm into the ERGIC (endoplasmic reticulum-Golgi intermediate compartment) and thereby secretion. Interacts with IL1R1. Interacts with S100A13; this interaction is the first step in the export of IL1A, followed by direct translocation of this complex across the plasma membrane. Post-translationally, acetylated within its nuclear localization sequence, which impacts subcellular localization. In terms of processing, proteolytic processed by CAPN1 in a calcium-dependent manner. Cleavage from 31 kDa precursor to 18 kDa biologically active molecules. Phosphorylated. Phosphorylation greatly enhances susceptibility to digestion and promotes the conversion of pre-IL1A alpha to the biologically active IL1A.

The protein localises to the nucleus. The protein resides in the cytoplasm. It is found in the secreted. Its function is as follows. Cytokine constitutively present intracellularly in nearly all resting non-hematopoietic cells that plays an important role in inflammation and bridges the innate and adaptive immune systems. After binding to its receptor IL1R1 together with its accessory protein IL1RAP, forms the high affinity interleukin-1 receptor complex. Signaling involves the recruitment of adapter molecules such as MYD88, IRAK1 or IRAK4. In turn, mediates the activation of NF-kappa-B and the three MAPK pathways p38, p42/p44 and JNK pathways. Within the cell, acts as an alarmin and cell death results in its liberation in the extracellular space after disruption of the cell membrane to induce inflammation and alert the host to injury or damage. In addition to its role as a danger signal, which occurs when the cytokine is passively released by cell necrosis, directly senses DNA damage and acts as signal for genotoxic stress without loss of cell integrity. This Rattus norvegicus (Rat) protein is Interleukin-1 alpha.